Consider the following 189-residue polypeptide: UPF0301 protein Cgl3084/cg3414 (189 aa).

This sequence belongs to the UPF0301 (AlgH) family.

This is UPF0301 protein Cgl3084/cg3414 from Corynebacterium glutamicum (strain ATCC 13032 / DSM 20300 / JCM 1318 / BCRC 11384 / CCUG 27702 / LMG 3730 / NBRC 12168 / NCIMB 10025 / NRRL B-2784 / 534).